Consider the following 441-residue polypeptide: 3-phosphoshikimate 1-carboxyvinyltransferase (441 aa).

Over residues 1–10 the composition is skewed to polar residues; the sequence is MSVTSTASSS. A disordered region spans residues 1 to 21; that stretch reads MSVTSTASSSRELRAGGGLSG. 3-phosphoshikimate is bound by residues Lys29, Ser30, and Arg34. Lys29 is a binding site for phosphoenolpyruvate. Phosphoenolpyruvate-binding residues include Gly103 and Arg132. The 3-phosphoshikimate site is built by Ser177, Gln179, Asp328, and Lys355. Phosphoenolpyruvate is bound at residue Gln179. The active-site Proton acceptor is the Asp328. Arg359 and Arg401 together coordinate phosphoenolpyruvate.

Belongs to the EPSP synthase family. In terms of assembly, monomer.

The protein resides in the cytoplasm. It catalyses the reaction 3-phosphoshikimate + phosphoenolpyruvate = 5-O-(1-carboxyvinyl)-3-phosphoshikimate + phosphate. It participates in metabolic intermediate biosynthesis; chorismate biosynthesis; chorismate from D-erythrose 4-phosphate and phosphoenolpyruvate: step 6/7. Its function is as follows. Catalyzes the transfer of the enolpyruvyl moiety of phosphoenolpyruvate (PEP) to the 5-hydroxyl of shikimate-3-phosphate (S3P) to produce enolpyruvyl shikimate-3-phosphate and inorganic phosphate. The polypeptide is 3-phosphoshikimate 1-carboxyvinyltransferase (Prochlorococcus marinus (strain MIT 9303)).